We begin with the raw amino-acid sequence, 125 residues long: Splicing factor 3B subunit 6 (125 aa).

An interaction with pre-mRNA branch site region spans residues 16–29 (EVNRILYIRNLPYK). An RRM domain is found at 19–94 (RILYIRNLPY…RYLVVLYYNA (76 aa)). Lysine 29 bears the N6-acetyllysine; alternate mark. Residue lysine 29 forms a Glycyl lysine isopeptide (Lys-Gly) (interchain with G-Cter in SUMO2); alternate linkage. At lysine 41 the chain carries N6-acetyllysine.

Component of the 17S U2 SnRNP complex, a ribonucleoprotein complex that contains small nuclear RNA (snRNA) U2 and a number of specific proteins. Part of the SF3B subcomplex of the 17S U2 SnRNP complex. SF3B associates with the splicing subcomplex SF3A and a 12S RNA unit to form the U2 small nuclear ribonucleoproteins complex (U2 snRNP). Within the SF3B complex interacts directly with SF3B1. Component of the minor spliceosome, which splices U12-type introns.

Its subcellular location is the nucleus. Functionally, component of the 17S U2 SnRNP complex of the spliceosome, a large ribonucleoprotein complex that removes introns from transcribed pre-mRNAs. The 17S U2 SnRNP complex (1) directly participates in early spliceosome assembly and (2) mediates recognition of the intron branch site during pre-mRNA splicing by promoting the selection of the pre-mRNA branch-site adenosine, the nucleophile for the first step of splicing. Within the 17S U2 SnRNP complex, SF3B6 is part of the SF3B subcomplex, which is required for 'A' complex assembly formed by the stable binding of U2 snRNP to the branchpoint sequence in pre-mRNA. Sequence independent binding of SF3A and SF3B subcomplexes upstream of the branch site is essential, it may anchor U2 snRNP to the pre-mRNA. Within the 17S U2 SnRNP complex, SF3B6 directly contacts the pre-mRNA branch site adenosine for the first catalytic step of splicing. SF3B6 stabilizes the intron branch site-U2 snRNA duplex, thereby promoting-binding of introns with poor sequence complementarity. Also acts as a component of the minor spliceosome, which is involved in the splicing of U12-type introns in pre-mRNAs. The sequence is that of Splicing factor 3B subunit 6 (Sf3b6) from Mus musculus (Mouse).